We begin with the raw amino-acid sequence, 392 residues long: MIGTPYTQGATRAMLLGSGELGKEVAIELQRLGVEVIAVDRYPNAPAMQVAHRSHVINMLDGEALKALIASEKPHLVIPEIEAIATQTLVELEAEGLKVVPTARATRLTMDREGIRRLAAETLALPTSPYVFCDSLTELQAALKVTGIPCVVKPVMSSSGKGQSVIRSPGDVQKAWDYAQSGGRAGEGRIIVEGFIDFDYEITLLTISAVDGIHFCAPIGHRQEDGDYRESWQPQAMSSLALDRAQHIAREVVQNLGGFGLFGVELFIKGDEVYFSEVSPRPHDTGMVTLISQDLSEFALHVRAILGLPVGTIVQRGPSASAVILVEGESSNIGYSGLAEALAQPNTQLRLFAKPEIHGRRRLGVALARGTSIDEALQTALASAGCIKVHFN.

N(1)-(5-phospho-beta-D-ribosyl)glycinamide is bound by residues 20–21 and Glu-80; that span reads EL. ATP contacts are provided by residues Arg-112, Lys-153, 158–163, 193–196, and Glu-201; these read SSGKGQ and EGFI. The 190-residue stretch at 117–306 folds into the ATP-grasp domain; sequence RLAAETLALP…EFALHVRAIL (190 aa). Mg(2+) is bound by residues Glu-265 and Glu-277. Residues Asp-284, Lys-354, and 361-362 each bind N(1)-(5-phospho-beta-D-ribosyl)glycinamide; that span reads RR.

Belongs to the PurK/PurT family. In terms of assembly, homodimer.

It carries out the reaction N(1)-(5-phospho-beta-D-ribosyl)glycinamide + formate + ATP = N(2)-formyl-N(1)-(5-phospho-beta-D-ribosyl)glycinamide + ADP + phosphate + H(+). It functions in the pathway purine metabolism; IMP biosynthesis via de novo pathway; N(2)-formyl-N(1)-(5-phospho-D-ribosyl)glycinamide from N(1)-(5-phospho-D-ribosyl)glycinamide (formate route): step 1/1. Involved in the de novo purine biosynthesis. Catalyzes the transfer of formate to 5-phospho-ribosyl-glycinamide (GAR), producing 5-phospho-ribosyl-N-formylglycinamide (FGAR). Formate is provided by PurU via hydrolysis of 10-formyl-tetrahydrofolate. The sequence is that of Formate-dependent phosphoribosylglycinamide formyltransferase from Shewanella amazonensis (strain ATCC BAA-1098 / SB2B).